The following is a 338-amino-acid chain: DNA-directed RNA polymerase I subunit RPA43 (338 aa).

A disordered region spans residues Glu209–Leu338. 3 positions are modified to phosphoserine: Ser242, Ser304, and Ser316. A Phosphothreonine modification is found at Thr322. The residue at position 328 (Ser328) is a Phosphoserine. Basic residues predominate over residues Ser328 to Leu338.

This sequence belongs to the eukaryotic RPA43 RNA polymerase subunit family. As to quaternary structure, component of the RNA polymerase I (Pol I) complex consisting of 13 subunits: a ten-subunit catalytic core composed of POLR1A/RPA1, POLR1B/RPA2, POLR1C/RPAC1, POLR1D/RPAC2, POLR1H/RPA12, POLR2E/RPABC1, POLR2F/RPABC2, POLR2H/RPABC3, POLR2K/RPABC4 and POLR2L/RPABC5; a mobile stalk subunit POLR1F/RPA43 protruding from the core and additional subunits homologous to general transcription factors POLR1E/RPA49 and POLR1G/RPA34. Interacts with RRN3/TIF-IA. Widely expressed. Expressed in all fetal and adult tissues tested, with highest expression in fetal lung, liver, and kidney, and low expression in all adult tissues.

It is found in the nucleus. It localises to the nucleolus. In terms of biological role, component of RNA polymerase I (Pol I), a DNA-dependent RNA polymerase which synthesizes ribosomal RNA precursors using the four ribonucleoside triphosphates as substrates. Through its association with RRN3/TIF-IA may be involved in recruitment of Pol I to rDNA promoters. The chain is DNA-directed RNA polymerase I subunit RPA43 from Homo sapiens (Human).